Reading from the N-terminus, the 262-residue chain is 4-hydroxy-2-oxovalerate aldolase (262 aa).

The Proton acceptor role is filled by histidine 48. Position 149 (glutamine 149) interacts with substrate. Glutamate 151 contributes to the Mg(2+) binding site. Substrate contacts are provided by alanine 176 and aspartate 177. Aspartate 177 is a Mg(2+) binding site.

It belongs to the HpcH/HpaI aldolase family.

The enzyme catalyses (S)-4-hydroxy-2-oxopentanoate = acetaldehyde + pyruvate. It functions in the pathway xenobiotic degradation; biphenyl degradation. Catalyzes the reversible retro-aldol cleavage of 4-hydroxy-2-oxovalerate to pyruvate and acetaldehyde. The sequence is that of 4-hydroxy-2-oxovalerate aldolase (bphF) from Novosphingobium aromaticivorans (Sphingomonas aromaticivorans).